The primary structure comprises 55 residues: Large ribosomal subunit protein bL33 (55 aa).

This sequence belongs to the bacterial ribosomal protein bL33 family.

The protein is Large ribosomal subunit protein bL33 of Yersinia pestis (strain Pestoides F).